Here is a 265-residue protein sequence, read N- to C-terminus: uncharacterized protein (265 aa).

Positions 7, 9, 94, 130, 155, and 205 each coordinate a divalent metal cation.

The protein belongs to the metallo-dependent hydrolases superfamily. TatD-type hydrolase family. A divalent metal cation serves as cofactor.

This is an uncharacterized protein from Escherichia coli O157:H7.